The primary structure comprises 413 residues: Replication factor C large subunit (413 aa).

54–61 (GPPGSGKT) is a binding site for ATP.

The protein belongs to the activator 1 small subunits family. RfcL subfamily. In terms of assembly, heteromultimer composed of small subunits (RfcS) and large subunits (RfcL).

Functionally, part of the RFC clamp loader complex which loads the PCNA sliding clamp onto DNA. This chain is Replication factor C large subunit, found in Thermofilum pendens (strain DSM 2475 / Hrk 5).